The following is a 195-amino-acid chain: dITP/XTP pyrophosphatase (195 aa).

Ser8–Lys13 lines the substrate pocket. 2 residues coordinate Mg(2+): Glu39 and Asp68. Residue Asp68 is the Proton acceptor of the active site. Substrate contacts are provided by residues Ser69, Phe149–Asp152, Lys172, and His177–Arg178.

The protein belongs to the HAM1 NTPase family. Homodimer. The cofactor is Mg(2+).

The catalysed reaction is XTP + H2O = XMP + diphosphate + H(+). It catalyses the reaction dITP + H2O = dIMP + diphosphate + H(+). It carries out the reaction ITP + H2O = IMP + diphosphate + H(+). Functionally, pyrophosphatase that catalyzes the hydrolysis of nucleoside triphosphates to their monophosphate derivatives, with a high preference for the non-canonical purine nucleotides XTP (xanthosine triphosphate), dITP (deoxyinosine triphosphate) and ITP. Seems to function as a house-cleaning enzyme that removes non-canonical purine nucleotides from the nucleotide pool, thus preventing their incorporation into DNA/RNA and avoiding chromosomal lesions. In Staphylococcus aureus (strain Mu50 / ATCC 700699), this protein is dITP/XTP pyrophosphatase.